The chain runs to 457 residues: UDP-N-acetylmuramate--L-alanine ligase (457 aa).

112–118 serves as a coordination point for ATP; sequence GTHGKTT.

The protein belongs to the MurCDEF family.

The protein localises to the cytoplasm. The catalysed reaction is UDP-N-acetyl-alpha-D-muramate + L-alanine + ATP = UDP-N-acetyl-alpha-D-muramoyl-L-alanine + ADP + phosphate + H(+). It functions in the pathway cell wall biogenesis; peptidoglycan biosynthesis. Cell wall formation. This chain is UDP-N-acetylmuramate--L-alanine ligase, found in Solidesulfovibrio magneticus (strain ATCC 700980 / DSM 13731 / RS-1) (Desulfovibrio magneticus).